The sequence spans 190 residues: uncharacterized protein (190 aa).

The helical transmembrane segment at 1–21 (MLVMSITFSFVAVALLVYFYV) threads the bilayer. The span at 103 to 114 (REEVCARPEHRS) shows a compositional bias: basic and acidic residues. The tract at residues 103 to 130 (REEVCARPEHRSAPSRAGSSAAKPTPTK) is disordered.

It to B.burgdorferi BB0265.

It is found in the membrane. This is an uncharacterized protein from Treponema pallidum (strain Nichols).